Here is a 318-residue protein sequence, read N- to C-terminus: HPr kinase/phosphorylase (318 aa).

Catalysis depends on residues His143 and Lys164. ATP is bound at residue 158-165; that stretch reads GKSGVGKS. Ser165 contacts Mg(2+). Asp182 acts as the Proton acceptor; for phosphorylation activity. Proton donor; for dephosphorylation activity in catalysis. An important for the catalytic mechanism of both phosphorylation and dephosphorylation region spans residues 206-215; that stretch reads MEIRGLGILN. Glu207 contributes to the Mg(2+) binding site. The active site involves Arg248. The tract at residues 269-274 is important for the catalytic mechanism of dephosphorylation; the sequence is PVKPGR.

Belongs to the HPrK/P family. In terms of assembly, homohexamer. It depends on Mg(2+) as a cofactor.

It catalyses the reaction [HPr protein]-L-serine + ATP = [HPr protein]-O-phospho-L-serine + ADP + H(+). The catalysed reaction is [HPr protein]-O-phospho-L-serine + phosphate + H(+) = [HPr protein]-L-serine + diphosphate. In terms of biological role, catalyzes the ATP- as well as the pyrophosphate-dependent phosphorylation of a specific serine residue in HPr, a phosphocarrier protein of the phosphoenolpyruvate-dependent sugar phosphotransferase system (PTS). HprK/P also catalyzes the pyrophosphate-producing, inorganic phosphate-dependent dephosphorylation (phosphorolysis) of seryl-phosphorylated HPr (P-Ser-HPr). The polypeptide is HPr kinase/phosphorylase (Leptospira borgpetersenii serovar Hardjo-bovis (strain L550)).